We begin with the raw amino-acid sequence, 143 residues long: AP-2 complex subunit sigma (143 aa).

Belongs to the adaptor complexes small subunit family. As to quaternary structure, adaptor protein complex 2 (AP-2) is a heterotetramer composed of two large adaptins (alpha-type subunit APL3 and beta-type subunit APL1), a medium chain (mu-type subunit APM4) and a small adaptin (sigma-type subunit APS2).

It localises to the cell membrane. Its subcellular location is the membrane. It is found in the coated pit. Component of the adaptor complexes which link clathrin to receptors in coated vesicles. Clathrin-associated protein complexes are believed to interact with the cytoplasmic tails of membrane proteins, leading to their selection and concentration. This Neurospora crassa (strain ATCC 24698 / 74-OR23-1A / CBS 708.71 / DSM 1257 / FGSC 987) protein is AP-2 complex subunit sigma (aps-2).